Reading from the N-terminus, the 251-residue chain is MSGHSKWATTKHKKAVIDGRRAKSFAKLIKNIEVAARVGGPDMAGNPALELAVTKAKKTSVPNDNIDRAIKRGSGQLGEAIDYQTIMYEGYGPQGTAILIECLTDNKNRAASEVRLAVSRNGGNMADPGSVSYLFARKGIVSLPQNELSEDDLLMAVLDAGAEEVKSEGENFEVISEPQDLPAIRSALTEAGIEYDTDDAGFVPSMQVELDVENAKKFMRLYDALEDLDDVQNVYSNADVSAEVMAQLDED.

Belongs to the TACO1 family.

It is found in the cytoplasm. The protein is Probable transcriptional regulatory protein RSal33209_2002 of Renibacterium salmoninarum (strain ATCC 33209 / DSM 20767 / JCM 11484 / NBRC 15589 / NCIMB 2235).